A 709-amino-acid chain; its full sequence is Caprin-1 (709 aa).

Composition is skewed to low complexity over residues 1–15 (MPSA…SKSS) and 22–43 (GSSG…QHPA). Positions 1 to 50 (MPSATSHSGSGSKSSGPPPPSGSSGSEAAAGAGAAAPASQHPATGTGAVQ) are disordered. Residue Pro-2 is modified to N-acetylproline. An N-acetylalanine modification is found at Pro-2. Phosphoserine is present on Ser-10. A coiled-coil region spans residues 60–94 (VIDKKLRNLEKKKGKLDDYQERMNKGERLNQDQLD). The residue at position 115 (Ser-115) is a Phosphoserine. Residues 125–153 (KTIKKTARREQLMREEAEQKRLKTVLELQ) are a coiled coil. Arg-165 is modified (omega-N-methylarginine). Positions 260–291 (EEAASAPAVEDQVPEAEPEPAEEYTEQSEVES) are disordered. Over residues 271 to 291 (QVPEAEPEPAEEYTEQSEVES) the composition is skewed to acidic residues. Ser-335 and Ser-343 each carry phosphoserine. Residues 360 to 381 (QDLMAQMQGPYNFIQDSMLDFE) form a G3BP1-binding region. Disordered stretches follow at residues 417–446 (LAQP…TASQ), 475–499 (TDQT…GTSK), and 524–709 (APVP…QQVN). Residues 433 to 446 (PLVSSTSEGYTASQ) are compositionally biased toward polar residues. Low complexity-rich tracts occupy residues 477-491 (QTTA…SQPQ) and 537-570 (QQNQ…QTVV). The segment covering 577-605 (PDQSHQVTGNHQQPPQQNTGFPRSNQPYY) has biased composition (polar residues). Phosphotyrosine; by EPHA4 is present on Tyr-625. Arg-626 and Arg-633 each carry omega-N-methylarginine. Residues Tyr-636 and Tyr-639 each carry the phosphotyrosine; by EPHA4 modification. An Omega-N-methylarginine modification is found at Arg-640. Residues 642 to 657 (SFSNTPNSGYTQSQFS) show a composition bias toward polar residues. 2 O-linked (GlcNAc) serine glycosylation sites follow: Ser-644 and Ser-649. Phosphotyrosine; by EPHA4 occurs at positions 651, 662, 665, and 670. 2 stretches are compositionally biased toward low complexity: residues 676–686 (RGSGQSGPRGA) and 697–709 (NRGM…QQVN). An Asymmetric dimethylarginine; alternate modification is found at Arg-698. Arg-698 bears the Omega-N-methylarginine; alternate mark.

The protein belongs to the caprin family. May form homomultimers. Interacts with G3BP1; interaction is direct and promotes stress granule formation. Interacts with G3BP2; interaction is direct and promotes stress granule formation. Interacts with PQBP1. Interacts with DDX3X. Interacts (when phosphorylated by EPHA4) with FMR1; interaction with FMR1 promotes formation of a membraneless compartment. As to quaternary structure, (Microbial infection) Interacts with Zika virus capsid protein C; this interaction is probably linked to the inhibition of stress granules formation by the virus. In terms of assembly, (Microbial infection) Interacts with rotavirus A non-structural protein 5; this interaction probably plays a role in the sequestration of CAPRIN1 in viral factories. (Microbial infection) Interacts with Japanese encephalitis virus capsid protein C; this interaction is involved in the suppression of the integrated stress response by the virus. In terms of processing, tyrosine phosphorylation by EPHA4 promotes interaction with FMR1 and liquid-liquid phase separation (LLPS) for the formation of a membraneless compartment that concentrates mRNAs with associated regulatory factors. O-glycosylated (O-GlcNAcylated), in a cell cycle-dependent manner. O-glycosylation by OGT inhibit ability to undergo liquid-liquid phase separation (LLPS). Ubiquitous.

It localises to the cytoplasm. The protein localises to the cytoplasmic ribonucleoprotein granule. It is found in the cytosol. Its subcellular location is the cell projection. The protein resides in the dendrite. It localises to the lamellipodium. With respect to regulation, ability to mediate liquid-liquid phase separation is regulated by ATP: moderate concentrations of ATP enhance phase separation, whereas high concentrations of ATP lead to inhibition of phase separation. MRNA-binding protein that acts as a regulator of mRNAs transport, translation and/or stability, and which is involved in neurogenesis, synaptic plasticity in neurons and cell proliferation and migration in multiple cell types. Plays an essential role in cytoplasmic stress granule formation. Acts as an mRNA regulator by mediating formation of some phase-separated membraneless compartment: undergoes liquid-liquid phase separation upon binding to target mRNAs, leading to assemble mRNAs into cytoplasmic ribonucleoprotein granules that concentrate mRNAs with associated regulatory factors. Undergoes liquid-liquid phase separation following phosphorylation and interaction with FMR1, promoting formation of cytoplasmic ribonucleoprotein granules that concentrate mRNAs with factors that inhibit translation and mediate deadenylation of target mRNAs. In these cytoplasmic ribonucleoprotein granules, CAPRIN1 mediates recruitment of CNOT7 deadenylase, leading to mRNA deadenylation and degradation. Binds directly and selectively to MYC and CCND2 mRNAs. In neuronal cells, directly binds to several mRNAs associated with RNA granules, including BDNF, CAMK2A, CREB1, MAP2, NTRK2 mRNAs, as well as to GRIN1 and KPNB1 mRNAs, but not to rRNAs. In Homo sapiens (Human), this protein is Caprin-1.